The primary structure comprises 201 residues: Recombination protein RecR (201 aa).

The C4-type zinc-finger motif lies at 60–75 (CSCCGNVDTIDPCTVC). The 96-residue stretch at 83-178 (SMIIVVEDVS…KTTRLAHGVP (96 aa)) folds into the Toprim domain.

Belongs to the RecR family.

Its function is as follows. May play a role in DNA repair. It seems to be involved in an RecBC-independent recombinational process of DNA repair. It may act with RecF and RecO. This chain is Recombination protein RecR, found in Allorhizobium ampelinum (strain ATCC BAA-846 / DSM 112012 / S4) (Agrobacterium vitis (strain S4)).